A 586-amino-acid polypeptide reads, in one-letter code: Alanine racemase ungC (586 aa).

The disordered stretch occupies residues 187 to 206 (RVGALPAAASTASPMGSSLP). Over residues 196-206 (STASPMGSSLP) the composition is skewed to polar residues.

Belongs to the trans-sulfuration enzymes family. Pyridoxal 5'-phosphate serves as cofactor.

It carries out the reaction L-alanine = D-alanine. The protein operates within secondary metabolite biosynthesis. Alanine racemase; part of the gene cluster that mediates the biosynthesis of the unguisins, gamma-aminobutyric acid (GABA)-containing fungal cyclic heptapeptides with the amino acid sequence cyclo-(D-Ala1-D-Val2-L-Phe3-D-Val4-D-Ala5-D-Trp6-GABA7) for unguisin A and cyclo-(D-Ala1-D-Val2-L-Leu3-D-Val4-D-Ala5-D-Trp6-GABA7) for unguisin B. Within the pathway, the alanine racemase ungC catalyzes the interconversion of L-alanine and D-alanine, providing the D-alanine which is accepted by the first adenylation domain of the nonribosomal peptide synthetase (NRPS) ungA. UngA is the main enzyme within the cluster which condenses the 7 residues using its respective 7 modules. The terminal condensation domain (Ct) is involved in cyclization with D-alanine and thereby releasing of unguisins A and B. Finally, the hydrolase ungD catalyzes the hydrolysis between the D-tryptophan and GABA residues of unguisins A and B to produce the corresponding linear peptides. The sequence is that of Alanine racemase ungC from Aspergillus violaceofuscus (strain CBS 115571).